The primary structure comprises 301 residues: Transcription factor bHLH103 (301 aa).

The 78-residue stretch at 29-106 (PRSAEIVVDF…LEGLFDSSEQ (78 aa)) folds into the KRAB domain. Disordered regions lie at residues 161–184 (EKSG…ETPS) and 239–272 (TSPH…PRQD). The 50-residue stretch at 180-229 (LETPSHFPSFKVRKEKLGDRITALQQLVSPFGKTDTASVLHDAIDYIKFL) folds into the bHLH domain. Residues 239–269 (TSPHLNSIGSGEQKQWSDKSSNNTHNQNCSP) are compositionally biased toward polar residues.

Homodimer. In terms of tissue distribution, mature root endodermis.

It is found in the nucleus. This is Transcription factor bHLH103 (BHLH103) from Arabidopsis thaliana (Mouse-ear cress).